Consider the following 106-residue polypeptide: Urease subunit beta (106 aa).

Belongs to the urease beta subunit family. Heterotrimer of UreA (gamma), UreB (beta) and UreC (alpha) subunits. Three heterotrimers associate to form the active enzyme.

The protein resides in the cytoplasm. It carries out the reaction urea + 2 H2O + H(+) = hydrogencarbonate + 2 NH4(+). It participates in nitrogen metabolism; urea degradation; CO(2) and NH(3) from urea (urease route): step 1/1. This Prochlorococcus marinus (strain MIT 9312) protein is Urease subunit beta.